A 159-amino-acid polypeptide reads, in one-letter code: Small ribosomal subunit protein uS4 (159 aa).

In terms of domain architecture, S4 RNA-binding spans 106–158; sequence RRLQTIVYRMGLAKSIYHARQLIVHGHIAIEGRRVTSPGFLVPRELEDKITLV.

This sequence belongs to the universal ribosomal protein uS4 family. In terms of assembly, part of the 30S ribosomal subunit. Contacts protein S5. The interaction surface between S4 and S5 is involved in control of translational fidelity.

One of the primary rRNA binding proteins, it binds directly to 16S rRNA where it nucleates assembly of the body of the 30S subunit. Its function is as follows. With S5 and S12 plays an important role in translational accuracy. This chain is Small ribosomal subunit protein uS4, found in Pyrobaculum arsenaticum (strain DSM 13514 / JCM 11321 / PZ6).